Consider the following 420-residue polypeptide: UDP-N-acetylglucosamine 1-carboxyvinyltransferase (420 aa).

Residue 22–23 (KN) participates in phosphoenolpyruvate binding. UDP-N-acetyl-alpha-D-glucosamine is bound at residue Arg92. Catalysis depends on Cys116, which acts as the Proton donor. Cys116 bears the 2-(S-cysteinyl)pyruvic acid O-phosphothioketal mark. UDP-N-acetyl-alpha-D-glucosamine contacts are provided by Asp306 and Ile328.

The protein belongs to the EPSP synthase family. MurA subfamily.

It is found in the cytoplasm. The catalysed reaction is phosphoenolpyruvate + UDP-N-acetyl-alpha-D-glucosamine = UDP-N-acetyl-3-O-(1-carboxyvinyl)-alpha-D-glucosamine + phosphate. It participates in cell wall biogenesis; peptidoglycan biosynthesis. Its function is as follows. Cell wall formation. Adds enolpyruvyl to UDP-N-acetylglucosamine. The protein is UDP-N-acetylglucosamine 1-carboxyvinyltransferase of Blochmanniella floridana.